We begin with the raw amino-acid sequence, 142 residues long: Hemoglobin subunit alpha-A (142 aa).

Positions 2–142 (VLTAGDKANV…VATALTSKYR (141 aa)) constitute a Globin domain. The heme b site is built by H59 and H88.

This sequence belongs to the globin family. As to quaternary structure, heterotetramer of two alpha-A chains and two beta chains. Red blood cells.

Its function is as follows. Involved in oxygen transport from the lung to the various peripheral tissues. In Chelonoidis niger (Galapagos giant tortoise), this protein is Hemoglobin subunit alpha-A.